Consider the following 283-residue polypeptide: Homeobox protein Hox-A9a (283 aa).

Disordered regions lie at residues 25–54 (VPRY…GTCS) and 162–181 (EKDA…EKPG). A DNA-binding region (homeobox) is located at residues 216 to 275 (TRKKRCPYTKHQILELEKEFLFNTYLTRDRRYEVARLLNLTERQVKIWFQNRRMKMKKFN).

It belongs to the Abd-B homeobox family.

The protein localises to the nucleus. Its function is as follows. Sequence-specific transcription factor which is part of a developmental regulatory system that provides cells with specific positional identities on the anterior-posterior axis. In Takifugu rubripes (Japanese pufferfish), this protein is Homeobox protein Hox-A9a (hoxa9a).